The primary structure comprises 381 residues: Choline transport ATP-binding protein OpuBA (381 aa).

The ABC transporter domain maps to 2-236 (LTLENVSKTY…PADEFVEEFI (235 aa)). 35–42 (GPSGCGKT) contacts ATP. CBS domains are found at residues 256-314 (MNTQ…LVSE) and 316-374 (LHED…WGEE).

The protein belongs to the ABC transporter superfamily.

Functionally, involved in a high affinity multicomponent binding-protein-dependent transport system for choline. Probably responsible for energy coupling to the transport system. In Bacillus subtilis (strain 168), this protein is Choline transport ATP-binding protein OpuBA (opuBA).